A 303-amino-acid chain; its full sequence is Probable 5-dehydro-4-deoxyglucarate dehydratase (303 aa).

Belongs to the DapA family.

It catalyses the reaction 5-dehydro-4-deoxy-D-glucarate + H(+) = 2,5-dioxopentanoate + CO2 + H2O. It functions in the pathway carbohydrate acid metabolism; D-glucarate degradation; 2,5-dioxopentanoate from D-glucarate: step 2/2. This is Probable 5-dehydro-4-deoxyglucarate dehydratase from Agrobacterium fabrum (strain C58 / ATCC 33970) (Agrobacterium tumefaciens (strain C58)).